The following is a 368-amino-acid chain: DNA replication and repair protein RecF (368 aa).

Gly-30 to Thr-37 is a binding site for ATP.

This sequence belongs to the RecF family.

The protein resides in the cytoplasm. Its function is as follows. The RecF protein is involved in DNA metabolism; it is required for DNA replication and normal SOS inducibility. RecF binds preferentially to single-stranded, linear DNA. It also seems to bind ATP. In Chlorobaculum parvum (strain DSM 263 / NCIMB 8327) (Chlorobium vibrioforme subsp. thiosulfatophilum), this protein is DNA replication and repair protein RecF.